The sequence spans 833 residues: Toll-like receptor 4 (833 aa).

Positions 1 to 23 (MMPPTRLAGTLIPAMAFLSCLRP) are cleaved as a signal peptide. Positions 24 to 54 (ESWDPCVEVVPNITYQCMDLNLHKIPDNIPS) constitute an LRRNT domain. At 24–632 (ESWDPCVEVV…FRNATCQVRK (609 aa)) the chain is on the extracellular side. An intrachain disulfide couples Cys-29 to Cys-40. N-linked (GlcNAc...) asparagine glycosylation is present at Asn-35. 5 LRR repeats span residues 55-76 (STKDLDMSFNPLRNLGSHSFSN), 79-100 (ELQVLDLSRCEIQIIEDDAYQG), 103-124 (HLSILILTGNPIQRLFPGAFSG), 127-148 (SLQTLVAVETNIASLEDFPIGH), and 151-172 (TLKELNVAHNLIHSFKLPEYFS). The N-linked (GlcNAc...) asparagine glycan is linked to Asn-173. LRR repeat units lie at residues 176-197 (NLEYLDLSNNKIQNIYHKDLQV), 205-225 (NLSLDLSLNPLDFIQPGAFKE), and 227-236 (KLRELTLRSN). Asn-205 carries N-linked (GlcNAc...) asparagine glycosylation. The N-linked (GlcNAc...) asparagine glycan is linked to Asn-238. A disulfide bond links Cys-281 and Cys-306. Asn-309 carries N-linked (GlcNAc...) asparagine glycosylation. 9 LRR repeats span residues 352–373 (PLKELVFSANEVRNAFTQVKLE), 374–394 (SLEFLDLSRNDFSLKSCCSER), 400–420 (RLKHLDLSFNNIITISSNFLG), 423–444 (QLEYLDFQHSSLKQVSDFSVFL), 448–456 (NLRYLDISY), 472–495 (SLQILKMAGNSFQDNFLPNIFMEL), 497–518 (NLTILDLSDCQLEQVSQVAFNS), 521–542 (KLQLLNMSHNHLLSLDTLPYEP), and 545–565 (SLQTLDCSFNRIVASKEQELR). A disulfide bond links Cys-390 and Cys-391. Asn-497 and Asn-526 each carry an N-linked (GlcNAc...) asparagine glycan. 2 N-linked (GlcNAc...) asparagine glycosylation sites follow: Asn-570 and Asn-575. Residues 579 to 630 (NDFACVCEHQSFLQWVKDQRQLLVEVEQMVCAKPLDMQGMPMLNFRNATCQV) form the LRRCT domain. Cystine bridges form between Cys-583/Cys-609 and Cys-585/Cys-628. Asn-625 is a glycosylation site (N-linked (GlcNAc...) asparagine). Residues 633-653 (TIITGSVFTVLLVFLVVVLVY) traverse the membrane as a helical segment. At 654–833 (KFYFHLMLLA…PEGMADAEGS (180 aa)) the chain is on the cytoplasmic side. The TIR domain maps to 673-816 (STYDAFVIYS…IFWRRLRKAL (144 aa)).

Belongs to the Toll-like receptor family. Belongs to the lipopolysaccharide (LPS) receptor, a multi-protein complex containing at least CD14, LY96 and TLR4. Binding to bacterial LPS leads to homodimerization. Interacts with LY96 via the extracellular domain. Interacts with MYD88 and TIRAP via their respective TIR domains. Interacts with TICAM2. Interacts with NOX4. Interacts with CNPY3 and HSP90B1; this interaction is required for proper folding in the endoplasmic reticulum. Interacts with MAP3K21; this interaction leads to negative regulation of TLR4 signaling. Interacts with CD36, following CD36 stimulation by oxLDL or amyloid-beta 42, and forms a heterodimer with TLR6. The trimeric complex is internalized and triggers inflammatory response. LYN kinase activity facilitates TLR4-TLR6 heterodimerization and signal initiation. Interacts with TICAM1 in response to LPS in a WDFY1-dependent manner. Interacts with WDFY1 in response to LPS. Interacts with SMPDL3B. Interacts with CEACAM1; upon lipopolysaccharide stimulation, forms a complex including TLR4 and the phosphorylated form of SYK and CEACAM1, which in turn, recruits PTPN6 that dephosphorylates SYK, reducing the production of reactive oxygen species (ROS) and lysosome disruption, which in turn, reduces the activity of the inflammasome. Interacts with RFTN1; the interaction occurs in response to lipopolysaccharide stimulation. Interacts with SCIMP; the interaction occurs in response to lipopolysaccharide stimulation and is enhanced by phosphorylation of SCIMP by LYN. This interaction facilitates the phosphorylation of TLR4 by LYN which elicits a selective cytokine response in macrophages. Interacts with TRAF3IP3. Interacts with TREM1; this interaction enhances TLR4-mediated inflammatory response. Interacts with ZG16B/PAUF. Interacts with CD82; this interaction inhibits TLR4-mediated signaling pathway. In terms of processing, phosphorylated on tyrosine residues by LYN after binding lipopolysaccharide. Ubiquitinated by RNF128 via 'Lys-28'-linked polyubiquitin chains, leading to proteasomal degradation.

Its subcellular location is the cell membrane. The protein localises to the early endosome. The protein resides in the cell projection. It is found in the ruffle. In terms of biological role, transmembrane receptor that functions as a pattern recognition receptor recognizing pathogen- and damage-associated molecular patterns (PAMPs and DAMPs) to induce innate immune responses via downstream signaling pathways. At the plasma membrane, cooperates with LY96 to mediate the innate immune response to bacterial lipopolysaccharide (LPS). Also involved in LPS-independent inflammatory responses triggered by free fatty acids, such as palmitate, and Ni(2+). Mechanistically, acts via MYD88, TIRAP and TRAF6, leading to NF-kappa-B activation, cytokine secretion and the inflammatory response. Alternatively, CD14-mediated TLR4 internalization via endocytosis is associated with the initiation of a MYD88-independent signaling via the TICAM1-TBK1-IRF3 axis leading to type I interferon production. In addition to the secretion of proinflammatory cytokines, initiates the activation of NLRP3 inflammasome and formation of a positive feedback loop between autophagy and NF-kappa-B signaling cascade. In complex with TLR6, promotes inflammation in monocytes/macrophages by associating with TLR6 and the receptor CD86. Upon ligand binding, such as oxLDL or amyloid-beta 42, the TLR4:TLR6 complex is internalized and triggers inflammatory response, leading to NF-kappa-B-dependent production of CXCL1, CXCL2 and CCL9 cytokines, via MYD88 signaling pathway, and CCL5 cytokine, via TICAM1 signaling pathway. In myeloid dendritic cells, vesicular stomatitis virus glycoprotein G but not LPS promotes the activation of IRF7, leading to type I IFN production in a CD14-dependent manner. The polypeptide is Toll-like receptor 4 (TLR4) (Felis catus (Cat)).